A 30-amino-acid chain; its full sequence is Cycloviolacin-H4 (30 aa).

The segment at residues 1–30 is a cross-link (cyclopeptide (Gly-Asn)); it reads GIPCAESCVWIPCTVTALLGCSCSNNVCYN. Disulfide bonds link Cys4–Cys21, Cys8–Cys23, and Cys13–Cys28.

This is a cyclic peptide.

In terms of biological role, probably participates in a plant defense mechanism. Has potent hemolytic activity. This chain is Cycloviolacin-H4, found in Viola hederacea (Australian violet).